We begin with the raw amino-acid sequence, 320 residues long: Cell-cell adhesion glycoprotein 64 (320 aa).

An N-terminal signal peptide occupies residues 1–19; sequence MNKFITLFVLLASVSVAMS. Intrachain disulfides connect Cys-39-Cys-57, Cys-67-Cys-79, Cys-73-Cys-86, Cys-98-Cys-110, Cys-104-Cys-115, Cys-123-Cys-138, Cys-132-Cys-147, Cys-157-Cys-171, and Cys-165-Cys-176. The N-linked (GlcNAc...) asparagine glycan is linked to Asn-49. N-linked (GlcNAc...) asparagine glycosylation is present at Asn-80. Residues Asn-141 and Asn-158 are each glycosylated (N-linked (GlcNAc...) asparagine). N-linked (GlcNAc...) asparagine glycosylation occurs at Asn-187. Intrachain disulfides connect Cys-188–Cys-202 and Cys-194–Cys-207. A glycan (N-linked (GlcNAc...) asparagine) is linked at Asn-216. 4 disulfides stabilise this stretch: Cys-226-Cys-246, Cys-232-Cys-234, Cys-266-Cys-285, and Cys-270-Cys-281. A lipid anchor (GPI-like-anchor amidated serine) is attached at Ser-298. Residues 299 to 320 constitute a propeptide, removed in mature form; it reads SATTIAFNAFVVFAIVLSVLLF.

Contains 18 disulfide bonds. In terms of processing, the GPI-like-anchor contains a phosphoceramide group, rather than a phosphatidyl group.

It is found in the cell membrane. Cell-cell adhesion during development. This Heterostelium pallidum (Cellular slime mold) protein is Cell-cell adhesion glycoprotein 64.